A 225-amino-acid polypeptide reads, in one-letter code: NAD(P)H-quinone oxidoreductase subunit K, chloroplastic (225 aa).

Residues cysteine 43, cysteine 44, cysteine 108, and cysteine 139 each contribute to the [4Fe-4S] cluster site.

The protein belongs to the complex I 20 kDa subunit family. In terms of assembly, NDH is composed of at least 16 different subunits, 5 of which are encoded in the nucleus. Requires [4Fe-4S] cluster as cofactor.

It is found in the plastid. Its subcellular location is the chloroplast thylakoid membrane. It catalyses the reaction a plastoquinone + NADH + (n+1) H(+)(in) = a plastoquinol + NAD(+) + n H(+)(out). The catalysed reaction is a plastoquinone + NADPH + (n+1) H(+)(in) = a plastoquinol + NADP(+) + n H(+)(out). Functionally, NDH shuttles electrons from NAD(P)H:plastoquinone, via FMN and iron-sulfur (Fe-S) centers, to quinones in the photosynthetic chain and possibly in a chloroplast respiratory chain. The immediate electron acceptor for the enzyme in this species is believed to be plastoquinone. Couples the redox reaction to proton translocation, and thus conserves the redox energy in a proton gradient. The sequence is that of NAD(P)H-quinone oxidoreductase subunit K, chloroplastic from Dioscorea elephantipes (Elephant's foot yam).